The sequence spans 426 residues: Dynein regulatory complex protein 10 (426 aa).

2 disordered regions span residues 18–37 (TRIG…LKPL) and 399–426 (SKKK…KGKK). In terms of domain architecture, IQ spans 377 to 406 (MVRAATLIQAFWKGYLVRSLLRSKKKRGKG). Positions 399-408 (SKKKRGKGKA) are enriched in basic residues. Basic and acidic residues predominate over residues 409–426 (KGKEKGKQKGKEKGKGKK).

Belongs to the DRC10 family. As to quaternary structure, component of the nexin-dynein regulatory complex (N-DRC). Interacts with CFAP52.

Its subcellular location is the cytoplasm. It is found in the cytoskeleton. The protein localises to the flagellum axoneme. In terms of biological role, component of the nexin-dynein regulatory complex (N-DRC), a key regulator of ciliary/flagellar motility which maintains the alignment and integrity of the distal axoneme and regulates microtubule sliding in motile axonemes. This Macaca fascicularis (Crab-eating macaque) protein is Dynein regulatory complex protein 10 (IQCD).